The following is a 178-amino-acid chain: Translation initiation factor IF-3 (178 aa).

The tract at residues 1–20 (MRRPFKTDAPVKDGPRSNRE) is disordered.

This sequence belongs to the IF-3 family. Monomer.

The protein localises to the cytoplasm. Its function is as follows. IF-3 binds to the 30S ribosomal subunit and shifts the equilibrium between 70S ribosomes and their 50S and 30S subunits in favor of the free subunits, thus enhancing the availability of 30S subunits on which protein synthesis initiation begins. This Rhizobium leguminosarum bv. trifolii (strain WSM2304) protein is Translation initiation factor IF-3.